The sequence spans 425 residues: Alpha-N-acetylgalactosaminidase (425 aa).

NAD(+) contacts are provided by residues N29 to R30, E51, W99 to H102, E119 to V120, and N148. Y177 is a binding site for substrate. Residues F194–W198 and Y211 contribute to the NAD(+) site. Substrate-binding positions include Y211–H214 and Y293.

The protein belongs to the Gfo/Idh/MocA family. Glycosyl hydrolase 109 subfamily. The cofactor is NAD(+).

The enzyme catalyses Cleavage of non-reducing alpha-(1-&gt;3)-N-acetylgalactosamine residues from human blood group A and AB mucin glycoproteins, Forssman hapten and blood group A lacto series glycolipids.. In terms of biological role, glycosidase that has specific alpha-N-acetylgalactosaminidase activity. In Bacteroides fragilis (strain ATCC 25285 / DSM 2151 / CCUG 4856 / JCM 11019 / LMG 10263 / NCTC 9343 / Onslow / VPI 2553 / EN-2), this protein is Alpha-N-acetylgalactosaminidase.